The chain runs to 199 residues: Probable chemoreceptor glutamine deamidase CheD (199 aa).

Belongs to the CheD family.

It catalyses the reaction L-glutaminyl-[protein] + H2O = L-glutamyl-[protein] + NH4(+). Functionally, probably deamidates glutamine residues to glutamate on methyl-accepting chemotaxis receptors (MCPs), playing an important role in chemotaxis. The polypeptide is Probable chemoreceptor glutamine deamidase CheD (Cereibacter sphaeroides (strain ATCC 17023 / DSM 158 / JCM 6121 / CCUG 31486 / LMG 2827 / NBRC 12203 / NCIMB 8253 / ATH 2.4.1.) (Rhodobacter sphaeroides)).